We begin with the raw amino-acid sequence, 520 residues long: Probable methylmalonate-semialdehyde/malonate-semialdehyde dehydrogenase [acylating], mitochondrial (520 aa).

6 residues coordinate NAD(+): Ala-169, Phe-171, Lys-195, Glu-198, Arg-199, and Ser-248. The active-site Nucleophile is the Cys-303. Glu-403 provides a ligand contact to NAD(+).

The protein belongs to the aldehyde dehydrogenase family. As to quaternary structure, homotetramer.

Its subcellular location is the mitochondrion. The enzyme catalyses 2-methyl-3-oxopropanoate + NAD(+) + CoA + H2O = propanoyl-CoA + hydrogencarbonate + NADH + H(+). It catalyses the reaction 3-oxopropanoate + NAD(+) + CoA + H2O = hydrogencarbonate + acetyl-CoA + NADH + H(+). In terms of biological role, probable malonate and methylmalonate semialdehyde dehydrogenase involved in the catabolism of valine, thymine, and compounds catabolized by way of beta-alanine, including uracil and cytidine. This is Probable methylmalonate-semialdehyde/malonate-semialdehyde dehydrogenase [acylating], mitochondrial from Drosophila melanogaster (Fruit fly).